A 235-amino-acid chain; its full sequence is MKLFVGLGNPGPKYARNRHNIGFMALDQIAADHGFSPWRTKFSGQMAEGKFGSTKVTLLKPETFMNRSGQSVGEAMRFFKLEPEDVIVFHDELDLAPGKCRVKTGGGHAGHNGLRSIHGHIGPEYQRVRLGIGHPGHKDRVSGYVLSDFAKAEAAWLDDLLRGIGDGAPELAAGDTGRFMNAVSLRTAPPRSSGGSPKTDKPAKATREPPPAAKPEATPEEETRSPLQRLVDKFR.

Tyr-14 contacts tRNA. The active-site Proton acceptor is the His-19. Positions 64, 66, and 112 each coordinate tRNA. Positions 186–235 are disordered; that stretch reads RTAPPRSSGGSPKTDKPAKATREPPPAAKPEATPEEETRSPLQRLVDKFR. The span at 198–207 shows a compositional bias: basic and acidic residues; that stretch reads KTDKPAKATR.

It belongs to the PTH family. In terms of assembly, monomer.

Its subcellular location is the cytoplasm. It carries out the reaction an N-acyl-L-alpha-aminoacyl-tRNA + H2O = an N-acyl-L-amino acid + a tRNA + H(+). Functionally, hydrolyzes ribosome-free peptidyl-tRNAs (with 1 or more amino acids incorporated), which drop off the ribosome during protein synthesis, or as a result of ribosome stalling. In terms of biological role, catalyzes the release of premature peptidyl moieties from peptidyl-tRNA molecules trapped in stalled 50S ribosomal subunits, and thus maintains levels of free tRNAs and 50S ribosomes. In Dinoroseobacter shibae (strain DSM 16493 / NCIMB 14021 / DFL 12), this protein is Peptidyl-tRNA hydrolase.